The sequence spans 113 residues: UPF0342 protein MGAS2096_Spy0691 (113 aa).

This sequence belongs to the UPF0342 family.

The sequence is that of UPF0342 protein MGAS2096_Spy0691 from Streptococcus pyogenes serotype M12 (strain MGAS2096).